Consider the following 608-residue polypeptide: Phosphogluconate dehydratase (608 aa).

The [4Fe-4S] cluster site is built by cysteine 154 and cysteine 221.

This sequence belongs to the IlvD/Edd family. [4Fe-4S] cluster is required as a cofactor.

It carries out the reaction 6-phospho-D-gluconate = 2-dehydro-3-deoxy-6-phospho-D-gluconate + H2O. The protein operates within carbohydrate metabolism; Entner-Doudoroff pathway. Catalyzes the dehydration of 6-phospho-D-gluconate to 2-dehydro-3-deoxy-6-phospho-D-gluconate. In Helicobacter pylori (strain J99 / ATCC 700824) (Campylobacter pylori J99), this protein is Phosphogluconate dehydratase.